Reading from the N-terminus, the 395-residue chain is Flap endonuclease 1 (395 aa).

The segment at 1 to 104 (MGIKQLYQVI…GELAKRTARK (104 aa)) is N-domain. Asp34 is a binding site for Mg(2+). The DNA site is built by Arg47 and Arg70. A Mg(2+)-binding site is contributed by Asp86. A disordered region spans residues 96-121 (ELAKRTARKTEATEAHEEAKETGTAE). The interval 122–253 (DVEKFSRRTV…NTALKLIRDH (132 aa)) is I-domain. The Mg(2+) site is built by Glu158, Glu160, Asp179, and Asp181. Glu158 is a binding site for DNA. DNA contacts are provided by Gly231 and Asp233. Asp233 serves as a coordination point for Mg(2+). An interaction with PCNA region spans residues 341-349 (QQSRLEGFF). The segment at 348-395 (FFKPVARSDEEKATLKRKHDEKLQEQKKRKKEEAKAKKEAKARPRGAG) is disordered. A compositionally biased stretch (basic and acidic residues) spans 353–389 (ARSDEEKATLKRKHDEKLQEQKKRKKEEAKAKKEAKA).

The protein belongs to the XPG/RAD2 endonuclease family. FEN1 subfamily. As to quaternary structure, interacts with PCNA. Three molecules of fen1 bind to one PCNA trimer with each molecule binding to one PCNA monomer. PCNA stimulates the nuclease activity without altering cleavage specificity. The cofactor is Mg(2+). Phosphorylated. Phosphorylation upon DNA damage induces relocalization to the nuclear plasma.

It is found in the nucleus. It localises to the nucleolus. Its subcellular location is the nucleoplasm. The protein resides in the mitochondrion. Structure-specific nuclease with 5'-flap endonuclease and 5'-3' exonuclease activities involved in DNA replication and repair. During DNA replication, cleaves the 5'-overhanging flap structure that is generated by displacement synthesis when DNA polymerase encounters the 5'-end of a downstream Okazaki fragment. It enters the flap from the 5'-end and then tracks to cleave the flap base, leaving a nick for ligation. Also involved in the long patch base excision repair (LP-BER) pathway, by cleaving within the apurinic/apyrimidinic (AP) site-terminated flap. Acts as a genome stabilization factor that prevents flaps from equilibrating into structures that lead to duplications and deletions. Also possesses 5'-3' exonuclease activity on nicked or gapped double-stranded DNA, and exhibits RNase H activity. Also involved in replication and repair of rDNA and in repairing mitochondrial DNA. The protein is Flap endonuclease 1 (fen1) of Aspergillus terreus (strain NIH 2624 / FGSC A1156).